The chain runs to 157 residues: UPF0262 protein RHE_CH00582 (157 aa).

The protein belongs to the UPF0262 family.

The chain is UPF0262 protein RHE_CH00582 from Rhizobium etli (strain ATCC 51251 / DSM 11541 / JCM 21823 / NBRC 15573 / CFN 42).